We begin with the raw amino-acid sequence, 204 residues long: Probable peptidyl-tRNA hydrolase (204 aa).

Catalysis depends on His-36, which acts as the Proton acceptor. Residues Asn-86 and Asn-132 each contribute to the tRNA site.

It belongs to the PTH family.

It catalyses the reaction an N-acyl-L-alpha-aminoacyl-tRNA + H2O = an N-acyl-L-amino acid + a tRNA + H(+). Peptidyl-tRNA hydrolase that cleaves nascent chains-tRNAs that are not stably fixed in the P-site of 60S ribosome-nascent chain complexes. Acts downstream of the ribosome-associated quality control (RQC) pathway to release non-ubiquitinated nascent chains from 60S and 80S ribosome-nascent chain complexes. Does not act on ubiquitinated nascent chains, which are cleaved by ANKZF1 for degradation. In Mus musculus (Mouse), this protein is Probable peptidyl-tRNA hydrolase.